The primary structure comprises 229 residues: Urease accessory protein UreF (229 aa).

The protein belongs to the UreF family. UreD, UreF and UreG form a complex that acts as a GTP-hydrolysis-dependent molecular chaperone, activating the urease apoprotein by helping to assemble the nickel containing metallocenter of UreC. The UreE protein probably delivers the nickel.

It is found in the cytoplasm. Required for maturation of urease via the functional incorporation of the urease nickel metallocenter. This chain is Urease accessory protein UreF, found in Alcanivorax borkumensis (strain ATCC 700651 / DSM 11573 / NCIMB 13689 / SK2).